Here is a 116-residue protein sequence, read N- to C-terminus: MEERIYLSMLLSTYGSLLTEKQVNVMRLYYDDDLSMPEIAELNNTTRQAIHDLIKRCHKMLLNYENKLKLVEKYKRNEDIKKDIKDKLYILKDKIQDKDNVQLIDEIEKDINSFSI.

It belongs to the UPF0122 family.

Its function is as follows. Might take part in the signal recognition particle (SRP) pathway. This is inferred from the conservation of its genetic proximity to ftsY/ffh. May be a regulatory protein. The chain is UPF0122 protein CA_C1753 from Clostridium acetobutylicum (strain ATCC 824 / DSM 792 / JCM 1419 / IAM 19013 / LMG 5710 / NBRC 13948 / NRRL B-527 / VKM B-1787 / 2291 / W).